The sequence spans 583 residues: Pescadillo (583 aa).

The stretch at 275–329 (EKLSALSASLARMVASVEEEEAELDHFPTEGEDQEKMEVREKMEQQQSKQKKLFE) forms a coiled coil. In terms of domain architecture, BRCT spans 323 to 416 (KQKKLFEGLK…IQLPVEEYFL (94 aa)). Disordered regions lie at residues 448 to 526 (RGEK…EEKA) and 558 to 583 (ANKL…KKKC). The segment covering 455-489 (EEDEEEEGEEEEDDEEDEEDDEQSEDEEEAEEEAN) has biased composition (acidic residues). Basic and acidic residues predominate over residues 512-526 (AKAENRARAAEEEKA).

This sequence belongs to the pescadillo family. Component of the PeBoW complex, composed of bop1, pes1 and wdr12. The complex is held together by bop1, which interacts with pes1 via its N-terminal domain and with wdr12 via a high-affinity interaction between the seven-bladed beta-propeller domains of the 2 proteins. The PeBoW complex associates with the 66S pre-ribosome.

The protein resides in the nucleus. It is found in the nucleolus. Its subcellular location is the nucleoplasm. Functionally, component of the PeBoW complex, which is required for maturation of 28S and 5.8S ribosomal RNAs and formation of the 60S ribosome. The sequence is that of Pescadillo (pes) from Danio rerio (Zebrafish).